Reading from the N-terminus, the 408-residue chain is Phosphatidylinositol transfer protein CSR1 (408 aa).

Ser2 carries the post-translational modification N-acetylserine. Position 2 is a phosphoserine (Ser2). Residues 157–317 (ETGVIKNLEL…YLGGENDNDL (161 aa)) form the CRAL-TRIO domain.

This sequence belongs to the PITP family. In terms of assembly, forms a complex with 2 TSA2 subunits. Binds phosphatidylinositol (PtdIns).

Its subcellular location is the cytoplasm. The protein resides in the microsome. It localises to the endosome. The enzyme catalyses a 1,2-diacyl-sn-glycero-3-phospho-(1D-myo-inositol)(in) = a 1,2-diacyl-sn-glycero-3-phospho-(1D-myo-inositol)(out). Non-classical phosphatidylinositol (PtdIns) transfer protein (PITP), which exhibits PtdIns-binding/transfer activity in the absence of detectable PtdCho-binding/transfer activity. Activates SPO14/PLD1 (phospholipase D1) by stimulating phosphoinositide synthesis via the STT4 PtdIns 4-kinase. Modulates ArfGAP function through effects on SPO14 activity. Inhibits phosphatidylcholine degradation by PLB1 (phospholipase B1). May also regulate post-Golgi membrane-trafficking events and have a role resistance to oxidative stress. Inhibits fatty acid synthase activity in response to heme depletion and oleic acid starvation, preventing saturated fatty acid (SFA) accumulation. The protein is Phosphatidylinositol transfer protein CSR1 (CSR1) of Saccharomyces cerevisiae (strain ATCC 204508 / S288c) (Baker's yeast).